Here is a 391-residue protein sequence, read N- to C-terminus: Chorismate synthase (391 aa).

Arg48 is a binding site for NADP(+). FMN-binding positions include 126–128 (RAS), Gly286, 301–305 (KPTSS), and Arg328.

The protein belongs to the chorismate synthase family. FMNH2 is required as a cofactor.

The enzyme catalyses 5-O-(1-carboxyvinyl)-3-phosphoshikimate = chorismate + phosphate. It functions in the pathway metabolic intermediate biosynthesis; chorismate biosynthesis; chorismate from D-erythrose 4-phosphate and phosphoenolpyruvate: step 7/7. In terms of biological role, catalyzes the anti-1,4-elimination of the C-3 phosphate and the C-6 proR hydrogen from 5-enolpyruvylshikimate-3-phosphate (EPSP) to yield chorismate, which is the branch point compound that serves as the starting substrate for the three terminal pathways of aromatic amino acid biosynthesis. This reaction introduces a second double bond into the aromatic ring system. In Saccharolobus islandicus (strain Y.N.15.51 / Yellowstone #2) (Sulfolobus islandicus), this protein is Chorismate synthase.